Consider the following 235-residue polypeptide: RING-H2 finger protein ATL33 (235 aa).

The helical transmembrane segment at Leu64–Asn84 threads the bilayer. Positions Cys87–Thr133 are disordered. A compositionally biased stretch (low complexity) spans Ser88–Ser103. Residues Ile116–Ser125 are compositionally biased toward polar residues. Residues Cys142 to Arg184 form an RING-type; atypical zinc finger. The segment covering Asn201 to Ser216 has biased composition (low complexity). Positions Asn201–Val235 are disordered.

It belongs to the RING-type zinc finger family. ATL subfamily.

The protein resides in the membrane. It carries out the reaction S-ubiquitinyl-[E2 ubiquitin-conjugating enzyme]-L-cysteine + [acceptor protein]-L-lysine = [E2 ubiquitin-conjugating enzyme]-L-cysteine + N(6)-ubiquitinyl-[acceptor protein]-L-lysine.. It functions in the pathway protein modification; protein ubiquitination. In Arabidopsis thaliana (Mouse-ear cress), this protein is RING-H2 finger protein ATL33 (ATL33).